Consider the following 444-residue polypeptide: Phosphoglucosamine mutase (444 aa).

Ser-102 serves as the catalytic Phosphoserine intermediate. The Mg(2+) site is built by Ser-102, Asp-239, Asp-241, and Asp-243. Ser-102 bears the Phosphoserine mark.

Belongs to the phosphohexose mutase family. Mg(2+) is required as a cofactor. Post-translationally, activated by phosphorylation.

It carries out the reaction alpha-D-glucosamine 1-phosphate = D-glucosamine 6-phosphate. In terms of biological role, catalyzes the conversion of glucosamine-6-phosphate to glucosamine-1-phosphate. This Saccharopolyspora erythraea (strain ATCC 11635 / DSM 40517 / JCM 4748 / NBRC 13426 / NCIMB 8594 / NRRL 2338) protein is Phosphoglucosamine mutase.